Reading from the N-terminus, the 1037-residue chain is Serine/threonine-protein kinase ULK2 (1037 aa).

In terms of domain architecture, Protein kinase spans 9–271; it reads YCKRDLVGHG…FEAFFSHPFL (263 aa). Residues 15–23 and Lys-39 contribute to the ATP site; that span reads VGHGAFAVV. Asp-131 (proton acceptor) is an active-site residue. Residues 319–350 form a disordered region; it reads ENLSSPPLGPPNYLQVSKDSASNSSKNSSCDT. Low complexity predominate over residues 335-348; that stretch reads SKDSASNSSKNSSC. Ser-430 is subject to Phosphoserine. Disordered stretches follow at residues 452-480, 494-515, 540-594, and 626-697; these read CSPVPGDTVQTGGRRLSTGSSRPYSPSPL, GHPQGHEARSRHSSGSPVPQTQ, QKLR…KTPL, and HGPA…NTER. 2 stretches are compositionally biased toward polar residues: residues 506–515 and 571–585; these read SSGSPVPQTQ and LGTSPTKHTGSSPRN. Positions 632-643 are enriched in basic and acidic residues; it reads QSKDGNDPRECS. Residues 658-678 are compositionally biased toward polar residues; that stretch reads QQQSKAVFGRSVSTGKLSEQQ. Residues Ser-772 and Ser-781 each carry the phosphoserine modification. The CTD-like region stretch occupies residues 813 to 1037; that stretch reads ELPEETLMER…SALCCSTATV (225 aa).

This sequence belongs to the protein kinase superfamily. Ser/Thr protein kinase family. APG1/unc-51/ULK1 subfamily. As to quaternary structure, component of a complex consisting of ATG13/KIAA0652, ULK1 and RB1CC1/FIP200. Interacts (via C-terminus) with ATG13/KIAA0652. Associates with the mammalian target of rapamycin complex 1 (mTORC1) through an interaction with RPTOR. Interacts with SYNGAP1. Autophosphorylated. In response to nutrient limitation, probably phosphorylated and activated by AMPK, leading to activate autophagy. In terms of tissue distribution, widely expressed.

The protein localises to the cytoplasmic vesicle membrane. It catalyses the reaction L-seryl-[protein] + ATP = O-phospho-L-seryl-[protein] + ADP + H(+). It carries out the reaction L-threonyl-[protein] + ATP = O-phospho-L-threonyl-[protein] + ADP + H(+). Functionally, serine/threonine-protein kinase involved in autophagy in response to starvation. Acts upstream of phosphatidylinositol 3-kinase PIK3C3 to regulate the formation of autophagophores, the precursors of autophagosomes. Part of regulatory feedback loops in autophagy: acts both as a downstream effector and a negative regulator of mammalian target of rapamycin complex 1 (mTORC1) via interaction with RPTOR. Activated via phosphorylation by AMPK, also acts as a negative regulator of AMPK through phosphorylation of the AMPK subunits PRKAA1, PRKAB2 and PRKAG1. May phosphorylate ATG13/KIAA0652, FRS2, FRS3 and RPTOR; however such data need additional evidences. Not involved in ammonia-induced autophagy or in autophagic response of cerebellar granule neurons (CGN) to low potassium concentration. Plays a role early in neuronal differentiation and is required for granule cell axon formation: may govern axon formation via Ras-like GTPase signaling and through regulation of the Rab5-mediated endocytic pathways within developing axons. The chain is Serine/threonine-protein kinase ULK2 (Ulk2) from Mus musculus (Mouse).